The primary structure comprises 127 residues: Methylglyoxal synthase (127 aa).

Positions 1-127 (MEKKIALIAH…IKGLESLILR (127 aa)) constitute an MGS-like domain. Substrate contacts are provided by residues H10, K14, 36-39 (TGTT), and 56-57 (SG). D62 serves as the catalytic Proton donor/acceptor. H89 serves as a coordination point for substrate.

This sequence belongs to the methylglyoxal synthase family.

The catalysed reaction is dihydroxyacetone phosphate = methylglyoxal + phosphate. In terms of biological role, catalyzes the formation of methylglyoxal from dihydroxyacetone phosphate. This is Methylglyoxal synthase from Borreliella afzelii (strain PKo) (Borrelia afzelii).